We begin with the raw amino-acid sequence, 311 residues long: UDP-N-acetylenolpyruvoylglucosamine reductase (311 aa).

An FAD-binding PCMH-type domain is found at 34-198 (MGGAADLFIT…LEGTFRLQKG (165 aa)). Residue Arg-177 is part of the active site. Ser-227 acts as the Proton donor in catalysis. Residue Glu-297 is part of the active site.

Belongs to the MurB family. The cofactor is FAD.

It localises to the cytoplasm. It carries out the reaction UDP-N-acetyl-alpha-D-muramate + NADP(+) = UDP-N-acetyl-3-O-(1-carboxyvinyl)-alpha-D-glucosamine + NADPH + H(+). It participates in cell wall biogenesis; peptidoglycan biosynthesis. Its function is as follows. Cell wall formation. The protein is UDP-N-acetylenolpyruvoylglucosamine reductase of Shouchella clausii (strain KSM-K16) (Alkalihalobacillus clausii).